The following is a 66-amino-acid chain: Large ribosomal subunit protein bL33c (66 aa).

Belongs to the bacterial ribosomal protein bL33 family.

It is found in the plastid. Its subcellular location is the chloroplast. The polypeptide is Large ribosomal subunit protein bL33c (Daucus carota (Wild carrot)).